A 1214-amino-acid polypeptide reads, in one-letter code: Reverse gyrase (1214 aa).

An RG N-terminal-type zinc finger spans residues 1–37 (MKAIYRDMCPNCRGAITDERLAAKNPCDACLDEPISM). Zn(2+)-binding residues include Cys-9, Cys-12, Cys-27, and Cys-30. ATP contacts are provided by residues Gln-89 and 106 to 113 (APTGMGKS). Residues 93 to 252 (VKRIIKGKSF…WEIIKLKKQL (160 aa)) enclose the Helicase ATP-binding domain. The DEAD box motif lies at 213 to 216 (DDVD). The topoisomerase I stretch occupies residues 635-1214 (DLVKSALMIV…YEEILRYVKS (580 aa)). One can recognise a Toprim domain in the interval 639–802 (SALMIVESPN…VIKRIEFHEV (164 aa)). Residue Glu-645 participates in Mg(2+) binding. The RG C-terminal-type zinc finger occupies 719-748 (IKRCRDCGHQFVDWEEKGVCPRCGSRNVYD). The Zn(2+) site is built by Cys-722, Cys-725, Cys-738, and Cys-741. Asp-771 contacts Mg(2+). Positions 818-1212 (NEDRVNAQLV…ELYEEILRYV (395 aa)) constitute a Topo IA-type catalytic domain. Tyr-955 functions as the O-(5'-phospho-DNA)-tyrosine intermediate in the catalytic mechanism.

In the N-terminal section; belongs to the DEAD box helicase family. DDVD subfamily. This sequence in the C-terminal section; belongs to the type IA topoisomerase family. Monomer. The cofactor is Zn(2+). It depends on Mg(2+) as a cofactor.

It is found in the cytoplasm. It catalyses the reaction ATP + H2O = ADP + phosphate + H(+). Its function is as follows. Modifies the topological state of DNA by introducing positive supercoils in an ATP-dependent process. Increases the linking number in steps of +1. Binds to single-stranded DNA, transiently cleaves and then rejoins the ends, introducing a positive supercoil in the process. The scissile phosphodiester is attacked by the catalytic tyrosine of the enzyme, resulting in the formation of a DNA-(5'-phosphotyrosyl)-enzyme intermediate. Probably involved in rewinding DNA strands in regions of the chromosome that have opened up to allow replication, transcription, DNA repair and/or for DNA protection. The sequence is that of Reverse gyrase from Pyrococcus furiosus (strain ATCC 43587 / DSM 3638 / JCM 8422 / Vc1).